The primary structure comprises 507 residues: ATP synthase subunit alpha, chloroplastic (507 aa).

170-177 (GDRQTGKT) contributes to the ATP binding site.

Belongs to the ATPase alpha/beta chains family. As to quaternary structure, F-type ATPases have 2 components, CF(1) - the catalytic core - and CF(0) - the membrane proton channel. CF(1) has five subunits: alpha(3), beta(3), gamma(1), delta(1), epsilon(1). CF(0) has four main subunits: a, b, b' and c.

It is found in the plastid. The protein resides in the chloroplast thylakoid membrane. The enzyme catalyses ATP + H2O + 4 H(+)(in) = ADP + phosphate + 5 H(+)(out). Produces ATP from ADP in the presence of a proton gradient across the membrane. The alpha chain is a regulatory subunit. This is ATP synthase subunit alpha, chloroplastic from Gossypium barbadense (Sea Island cotton).